We begin with the raw amino-acid sequence, 433 residues long: Phosphoglycerate kinase, chloroplastic (433 aa).

A chloroplast-targeting transit peptide spans 1–28; sequence GASFSLHVLSKINSYKSQSTKPIRGVAS. The (2R)-3-phosphoglycerate site is built by alanine 51, aspartate 52, asparagine 54, arginine 68, serine 90, histidine 91, glycine 93, arginine 94, arginine 149, histidine 181, and arginine 182. Residue glycine 227 coordinates ADP. Glycine 227 serves as a coordination point for CDP. 2 residues coordinate AMP: lysine 229 and lysine 233. Lysine 233 lines the ATP pocket. An ADP-binding site is contributed by glycine 251. Residue glycine 251 participates in CDP binding. Residues glycine 252 and glycine 324 each coordinate AMP. Residues glycine 252 and glycine 324 each coordinate ATP. 2 residues coordinate CDP: glycine 349 and phenylalanine 354. ADP is bound at residue phenylalanine 354. Glutamate 355 provides a ligand contact to AMP. Positions 355, 386, and 387 each coordinate ATP. Residue aspartate 386 coordinates Mg(2+).

This sequence belongs to the phosphoglycerate kinase family. In terms of assembly, monomer. Mg(2+) serves as cofactor.

The protein localises to the plastid. The protein resides in the chloroplast. It carries out the reaction (2R)-3-phosphoglycerate + ATP = (2R)-3-phospho-glyceroyl phosphate + ADP. It functions in the pathway carbohydrate biosynthesis; Calvin cycle. The polypeptide is Phosphoglycerate kinase, chloroplastic (Spinacia oleracea (Spinach)).